Consider the following 290-residue polypeptide: NAD kinase (290 aa).

The active-site Proton acceptor is the Asp-72. NAD(+) contacts are provided by residues 72 to 73 (DG), Lys-77, 145 to 146 (NE), Asp-175, 186 to 191 (TAYSLS), and Ala-210.

It belongs to the NAD kinase family. A divalent metal cation serves as cofactor.

It localises to the cytoplasm. It catalyses the reaction NAD(+) + ATP = ADP + NADP(+) + H(+). In terms of biological role, involved in the regulation of the intracellular balance of NAD and NADP, and is a key enzyme in the biosynthesis of NADP. Catalyzes specifically the phosphorylation on 2'-hydroxyl of the adenosine moiety of NAD to yield NADP. This Bacteroides fragilis (strain ATCC 25285 / DSM 2151 / CCUG 4856 / JCM 11019 / LMG 10263 / NCTC 9343 / Onslow / VPI 2553 / EN-2) protein is NAD kinase.